Here is an 807-residue protein sequence, read N- to C-terminus: 85/88 kDa calcium-independent phospholipase A2 (807 aa).

Serine 13 is subject to Phosphoserine. 9 ANK repeats span residues 120-147, 151-181, 185-215, 219-248, 251-281, 286-312, 316-345, 349-378, and 382-403; these read WTVT…ANST, EGCT…QMDV, KGET…GLNQ, QGLT…RCNI, PGGF…QIHS, YGAS…DVDS, SGNT…NAGA, HGNT…EVDT, and FGET…KALL. 2 consecutive transmembrane segments (helical) span residues 481–501 and 512–532; these read LLCL…LIAI and LFDW…ILHS. In terms of domain architecture, PNPLA spans 482 to 666; the sequence is LCLDGGGVKG…LANNPTLDAM (185 aa). Positions 486 to 491 match the GXGXXG motif; the sequence is GGGVKG. The short motif at 518–522 is the GXSXG element; it reads GTSTG. Serine 520 serves as the catalytic Nucleophile. Residue aspartate 653 is the Proton acceptor of the active site. The DGA/G signature appears at 653–655; it reads DGG. Positions 678-687 are calmodulin-binding (1-9-14 motif); sequence RKGQGNKVKK. Residues 749-760 are calmodulin-binding (IQ motif); the sequence is AWCEMVGIQYFR.

In terms of assembly, homodimer formed by catalytic domains tightly interacting through a large hydrophobic interface. The contact area involves 3 alpha helices, several loops and a part of the beta sheet from each monomer. Both active sites of the dimer are in close proximity adopting an open conformation that provide sufficient space for phospholipid access and favoring cooperativity in deacylation-reacylation reactions. Each monomer has 9 ankyrin repeats stacked side-by-side in an elongated structure oriented outwards from the catalytic core. As to expression, expressed in pancreatic beta-cells. Expressed in skeletal muscle (at protein level).

It is found in the cytoplasm. It localises to the cell membrane. The protein resides in the mitochondrion. The protein localises to the cell projection. Its subcellular location is the pseudopodium. It carries out the reaction a 1,2-diacyl-sn-glycero-3-phosphocholine + H2O = a 1-acyl-sn-glycero-3-phosphocholine + a fatty acid + H(+). It catalyses the reaction a 1-O-alkyl-2-acyl-sn-glycero-3-phosphocholine + H2O = a 1-O-alkyl-sn-glycero-3-phosphocholine + a fatty acid + H(+). The enzyme catalyses 1,2-dihexadecanoyl-sn-glycero-3-phosphocholine + H2O = 1-hexadecanoyl-sn-glycero-3-phosphocholine + hexadecanoate + H(+). The catalysed reaction is 1-hexadecanoyl-2-(9Z-octadecenoyl)-sn-glycero-3-phosphocholine + H2O = 1-hexadecanoyl-sn-glycero-3-phosphocholine + (9Z)-octadecenoate + H(+). It carries out the reaction 1-hexadecanoyl-2-(9Z,12Z-octadecadienoyl)-sn-glycero-3-phosphocholine + H2O = (9Z,12Z)-octadecadienoate + 1-hexadecanoyl-sn-glycero-3-phosphocholine + H(+). It catalyses the reaction 1-hexadecanoyl-2-(5Z,8Z,11Z,14Z-eicosatetraenoyl)-sn-glycero-3-phosphocholine + H2O = 1-hexadecanoyl-sn-glycero-3-phosphocholine + (5Z,8Z,11Z,14Z)-eicosatetraenoate + H(+). The enzyme catalyses 1-octadecanoyl-2-(5Z,8Z,11Z,14Z-eicosatetraenoyl)-sn-glycero-3-phosphocholine + H2O = 1-octadecanoyl-sn-glycero-3-phosphocholine + (5Z,8Z,11Z,14Z)-eicosatetraenoate + H(+). The catalysed reaction is 1-hexadecanoyl-2-(5Z,8Z,11Z,14Z-eicosatetraenoyl)-sn-glycero-3-phosphoethanolamine + H2O = 1-hexadecanoyl-sn-glycero-3-phosphoethanolamine + (5Z,8Z,11Z,14Z)-eicosatetraenoate + H(+). It carries out the reaction 1,2-dihexadecanoyl-sn-glycero-3-phosphate + H2O = 1-hexadecanoyl-sn-glycero-3-phosphate + hexadecanoate + H(+). It catalyses the reaction a 1-acyl-sn-glycero-3-phosphocholine + H2O = sn-glycerol 3-phosphocholine + a fatty acid + H(+). The enzyme catalyses 1-hexadecanoyl-sn-glycero-3-phosphocholine + H2O = sn-glycerol 3-phosphocholine + hexadecanoate + H(+). The catalysed reaction is 1-(5Z,8Z,11Z,14Z-eicosatetraenoyl)-sn-glycero-3-phosphocholine + H2O = sn-glycerol 3-phosphocholine + (5Z,8Z,11Z,14Z)-eicosatetraenoate + H(+). It carries out the reaction 2-(5Z,8Z,11Z,14Z)-eicosatetraenoyl-sn-glycero-3-phosphocholine + H2O = sn-glycerol 3-phosphocholine + (5Z,8Z,11Z,14Z)-eicosatetraenoate + H(+). It catalyses the reaction 1-O-hexadecyl-2-(5Z,8Z,11Z,14Z)-eicosatetraenoyl-sn-glycero-3-phosphocholine + H2O = 1-O-hexadecyl-sn-glycero-3-phosphocholine + (5Z,8Z,11Z,14Z)-eicosatetraenoate + H(+). The enzyme catalyses 1-O-hexadecyl-2-acetyl-sn-glycero-3-phosphocholine + H2O = 1-O-hexadecyl-sn-glycero-3-phosphocholine + acetate + H(+). The catalysed reaction is hexadecanoyl-CoA + H2O = hexadecanoate + CoA + H(+). It carries out the reaction 1',3'-bis[1,2-di-(9Z-octadecenoyl)-sn-glycero-3-phospho]-glycerol + H2O = 1'-[1,2-di-(9Z-octadecenoyl)-sn-glycero-3-phospho]-3'-[1-(9Z-octadecenoyl)-sn-glycero-3-phospho]-glycerol + (9Z)-octadecenoate + H(+). It catalyses the reaction 1'-[1,2-di-(9Z-octadecenoyl)-sn-glycero-3-phospho]-3'-[1-(9Z-octadecenoyl)-sn-glycero-3-phospho]-glycerol + H2O = 1',3'-bis-[1-(9Z-octadecenoyl)-sn-glycero-3-phospho]-glycerol + (9Z)-octadecenoate + H(+). The enzyme catalyses 1',3'-bis-[1,2-di-(9Z,12Z-octadecadienoyl)-sn-glycero-3-phospho]-glycerol + H2O = 1'-[1,2-di-(9Z,12Z-octadecadienoyl)-sn-glycero-3-phospho]-3'-[1-(9Z,12Z-octadecadienoyl)-sn-glycero-3-phospho]-glycerol + (9Z,12Z)-octadecadienoate + H(+). The catalysed reaction is 1-octadecanoyl-2-(15-hydroxy-(5Z,8Z,11Z,13E)-eicosatetraenoyl)-sn-glycero-3-phosphoethanolamine + H2O = 1-octadecanoyl-sn-glycero-3-phosphoethanolamine + 15-hydroxy-(5Z,8Z,11Z,13E)-eicosatetraenoate + H(+). With respect to regulation, activated by ATP. Inhibited by calcium-activated calmodulin. Inhibited by bromoenol lactone (BEL). Functionally, calcium-independent phospholipase involved in phospholipid remodeling with implications in cellular membrane homeostasis, mitochondrial integrity and signal transduction. Hydrolyzes the ester bond of the fatty acyl group attached at sn-1 or sn-2 position of phospholipids (phospholipase A1 and A2 activity respectively), producing lysophospholipids that are used in deacylation-reacylation cycles. Hydrolyzes both saturated and unsaturated long fatty acyl chains in various glycerophospholipid classes such as phosphatidylcholines, phosphatidylethanolamines and phosphatidates, with a preference for hydrolysis at sn-2 position. Can further hydrolyze lysophospholipids carrying saturated fatty acyl chains (lysophospholipase activity). Upon oxidative stress, contributes to remodeling of mitochondrial phospholipids in pancreatic beta cells, in a repair mechanism to reduce oxidized lipid content. Preferentially hydrolyzes oxidized polyunsaturated fatty acyl chains from cardiolipins, yielding monolysocardiolipins that can be reacylated with unoxidized fatty acyls to regenerate native cardiolipin species. Hydrolyzes oxidized glycerophosphoethanolamines present in pancreatic islets, releasing oxidized polyunsaturated fatty acids such as hydroxyeicosatetraenoates (HETEs). Has thioesterase activity toward fatty-acyl CoA releasing CoA-SH known to facilitate fatty acid transport and beta-oxidation in mitochondria particularly in skeletal muscle. Plays a role in regulation of membrane dynamics and homeostasis. Selectively hydrolyzes sn-2 arachidonoyl group in plasmalogen phospholipids, structural components of lipid rafts and myelin. Regulates F-actin polymerization at the pseudopods, which is required for both speed and directionality of MCP1/CCL2-induced monocyte chemotaxis. Targets membrane phospholipids to produce potent lipid signaling messengers. Generates lysophosphatidate (LPA, 1-acyl-glycerol-3-phosphate), which acts via G-protein receptors in various cell types. Has phospholipase A2 activity toward platelet-activating factor (PAF, 1-O-alkyl-2-acetyl-sn-glycero-3-phosphocholine), likely playing a role in inactivation of this potent pro-inflammatory signaling lipid. In response to glucose, amplifies calcium influx in pancreatic beta cells to promote INS secretion. The polypeptide is 85/88 kDa calcium-independent phospholipase A2 (Pla2g6) (Rattus norvegicus (Rat)).